We begin with the raw amino-acid sequence, 107 residues long: Iron-binding protein IscA (107 aa).

3 residues coordinate Fe cation: Cys35, Cys99, and Cys101.

This sequence belongs to the HesB/IscA family. In terms of assembly, homodimer; may form tetramers and higher multimers. Requires Fe cation as cofactor.

Functionally, is able to transfer iron-sulfur clusters to apo-ferredoxin. Multiple cycles of [2Fe2S] cluster formation and transfer are observed, suggesting that IscA acts catalytically. Recruits intracellular free iron so as to provide iron for the assembly of transient iron-sulfur cluster in IscU in the presence of IscS, L-cysteine and the thioredoxin reductase system TrxA/TrxB. This chain is Iron-binding protein IscA, found in Photorhabdus laumondii subsp. laumondii (strain DSM 15139 / CIP 105565 / TT01) (Photorhabdus luminescens subsp. laumondii).